The following is a 382-amino-acid chain: MSINVFWFLPTHGDGHYLGSSEGARAVDYSYLQQIAQAADRLGFGGVLIPTGRSCEDSWLVAASLIPVTQRLKFLVALRPGIISPTLAARQAATLDRLSNGRALFNLVTGGDPEELAAEGLHLNHTERYEASAEFTHVWRKVLEGETVDFAGKHIQVKGAKLLFPPVQHPRPPLYFGGSSAAAQDLAAEQVELYLTWGETPEQVKEKVEEVRAKAAAKGRTVRFGIRLHVIVRETTEEAWRAANRLIANLDDKTIADAQQAFARFDSVGQQRMAALHGGKKDNLEISPNLWAGVGLVRGGAGTALVGDGPTVAQRIQEYADLGIDTFVFSGYPHLEEAYRVSELLFPHLDLATTELPTQRPATQPQGEVVANIYVPQKVSQS.

The protein belongs to the SsuD family. Homotetramer.

It carries out the reaction an alkanesulfonate + FMNH2 + O2 = an aldehyde + FMN + sulfite + H2O + 2 H(+). In terms of biological role, catalyzes the desulfonation of aliphatic sulfonates. The polypeptide is Alkanesulfonate monooxygenase (Yersinia pseudotuberculosis serotype O:1b (strain IP 31758)).